The primary structure comprises 233 residues: Nickel import system ATP-binding protein NikE (233 aa).

Residues 2–228 (IELKHVTFGY…DRHPYTKELV (227 aa)) form the ABC transporter domain. Position 35–42 (35–42 (GESGCGKS)) interacts with ATP.

This sequence belongs to the ABC transporter superfamily. In terms of assembly, the complex is composed of two ATP-binding proteins (NikD and NikE), two transmembrane proteins (NikB and NikC) and a solute-binding protein (NikA).

The protein resides in the cell membrane. It carries out the reaction Ni(2+)(out) + ATP + H2O = Ni(2+)(in) + ADP + phosphate + H(+). In terms of biological role, part of the ABC transporter complex NikABCDE (Opp2) involved in nickel import. Probably responsible for energy coupling to the transport system. In Staphylococcus aureus (strain Mu50 / ATCC 700699), this protein is Nickel import system ATP-binding protein NikE.